Reading from the N-terminus, the 711-residue chain is MPSKKTDAPKQSEAAGTQTPDRANTNAKLQSLETFRSDATGQALRTNQGVKIADNQNSLKAGARGPSLLEDFIMREKITHFDHERIPERIVHARGTGAHGYFQSYGNHADLTKAGFLQDPDKITPVFVRFSTVQGPRGSGDTVRDVRGFAVKFYTDEGNFDLVGNNMPVFFIQDAIKFPDFVHAVKPEPHNEIPTGGSAHDTFWDFVSLVPESAHMVMWAMSDRAIPRSLRMMEGFGVHTFRLINAEGVASFVKFHWKPRQGVHSLLWDEAQKLAGKDTDFQRRDLWEAIENGDYPEWELGVQIVPEADEHKFDFDLLDPTKIIPEELVPVTPLGKMVLNRNPDNFFAEVEQVAFCPGHIVPGIDFTNDPLLQGRLFSYTDTQISRLGGPNFHQIPINRPVAPNHNNQRDALHQHVVHKGRASYEPNSIDGGWPKETPAAAQDGGFESYQERIDAHKIRQRSESFGDHFSQARLFFQSMSPTEQQHIIKAYSFELGKVEREHIRAREVNEILANIDLKLAAAVAANLGLPAPKAGTVQVKGSQLAQSPALSQMNHPGSVGIKGRKIAVLVANGVDAASVDKLIKALEAHSARPMLLGPTSAPVKATDGKQLPVEASMEGMPSIMFDGIVVPSGKASTDALAASGLAKHFLLEGYKHLKAMVLTKELATGLGLKEDKGLLLADDQKAVDAFVKAVEGHRVWEREAAAEAVPA.

Residues 1–10 (MPSKKTDAPK) show a composition bias toward basic and acidic residues. The segment at 1–27 (MPSKKTDAPKQSEAAGTQTPDRANTNA) is disordered. A compositionally biased stretch (polar residues) spans 14–27 (AAGTQTPDRANTNA). Active-site residues include His92 and Asn165. Tyr379 is a binding site for heme.

This sequence belongs to the catalase family. HPII subfamily. Requires heme as cofactor.

The protein localises to the cytoplasm. It carries out the reaction 2 H2O2 = O2 + 2 H2O. Decomposes hydrogen peroxide into water and oxygen; serves to protect cells from the toxic effects of hydrogen peroxide. This chain is Catalase HPII (katE), found in Pseudomonas putida (Arthrobacter siderocapsulatus).